A 124-amino-acid chain; its full sequence is Fluoride-specific ion channel FluC (124 aa).

A run of 3 helical transmembrane segments spans residues 36-56, 63-83, and 99-119; these read VGTM…VVVL, YAPF…AFSL, and AYVG…MAAV. 2 residues coordinate Na(+): glycine 73 and threonine 76.

The protein belongs to the fluoride channel Fluc/FEX (TC 1.A.43) family.

Its subcellular location is the cell inner membrane. It catalyses the reaction fluoride(in) = fluoride(out). Na(+) is not transported, but it plays an essential structural role and its presence is essential for fluoride channel function. Functionally, fluoride-specific ion channel. Important for reducing fluoride concentration in the cell, thus reducing its toxicity. This chain is Fluoride-specific ion channel FluC, found in Cereibacter sphaeroides (strain ATCC 17029 / ATH 2.4.9) (Rhodobacter sphaeroides).